A 428-amino-acid chain; its full sequence is Aerobic C4-dicarboxylate transport protein (428 aa).

A run of 9 helical transmembrane segments spans residues 5-27 (LFKS…GHYY), 47-64 (MIIA…IAGM), 77-99 (ALLY…VNVV), 141-163 (VIGA…FGFA), 184-206 (VIFG…AMAF), 216-238 (LVQL…VVVL), 289-311 (VVGL…YLTM), 326-348 (IFHQ…GVTG), and 353-375 (VLAA…ILGI).

The protein belongs to the dicarboxylate/amino acid:cation symporter (DAACS) (TC 2.A.23) family.

It is found in the cell inner membrane. Responsible for the transport of dicarboxylates such as succinate, fumarate, and malate from the periplasm across the membrane. The polypeptide is Aerobic C4-dicarboxylate transport protein (Salmonella typhi).